We begin with the raw amino-acid sequence, 444 residues long: Trigger factor (444 aa).

A PPIase FKBP-type domain is found at 165 to 250 (GDFAKFDFEG…LHEIQELKIP (86 aa)).

It belongs to the FKBP-type PPIase family. Tig subfamily.

Its subcellular location is the cytoplasm. It catalyses the reaction [protein]-peptidylproline (omega=180) = [protein]-peptidylproline (omega=0). Involved in protein export. Acts as a chaperone by maintaining the newly synthesized protein in an open conformation. Functions as a peptidyl-prolyl cis-trans isomerase. The protein is Trigger factor of Campylobacter jejuni subsp. jejuni serotype O:23/36 (strain 81-176).